We begin with the raw amino-acid sequence, 31 residues long: Photosystem II reaction center protein T (31 aa).

A helical transmembrane segment spans residues S3 to F23.

It belongs to the PsbT family. PSII is composed of 1 copy each of membrane proteins PsbA, PsbB, PsbC, PsbD, PsbE, PsbF, PsbH, PsbI, PsbJ, PsbK, PsbL, PsbM, PsbT, PsbX, PsbY, PsbZ, Psb30/Ycf12, peripheral proteins PsbO, CyanoQ (PsbQ), PsbU, PsbV and a large number of cofactors. It forms dimeric complexes.

The protein localises to the cellular thylakoid membrane. Found at the monomer-monomer interface of the photosystem II (PS II) dimer, plays a role in assembly and dimerization of PSII. PSII is a light-driven water plastoquinone oxidoreductase, using light energy to abstract electrons from H(2)O, generating a proton gradient subsequently used for ATP formation. The polypeptide is Photosystem II reaction center protein T (Rippkaea orientalis (strain PCC 8801 / RF-1) (Cyanothece sp. (strain PCC 8801))).